We begin with the raw amino-acid sequence, 482 residues long: Cysteine--tRNA ligase (482 aa).

Cys29 provides a ligand contact to Zn(2+). Positions 31 to 41 (PTVYDFAHIGN) match the 'HIGH' region motif. Zn(2+) contacts are provided by Cys224, His249, and Glu253. A 'KMSKS' region motif is present at residues 282–286 (KMSKS). An ATP-binding site is contributed by Lys285.

Belongs to the class-I aminoacyl-tRNA synthetase family. Monomer. It depends on Zn(2+) as a cofactor.

It is found in the cytoplasm. The enzyme catalyses tRNA(Cys) + L-cysteine + ATP = L-cysteinyl-tRNA(Cys) + AMP + diphosphate. This is Cysteine--tRNA ligase from Nitrobacter hamburgensis (strain DSM 10229 / NCIMB 13809 / X14).